The primary structure comprises 203 residues: Glycerol-3-phosphate acyltransferase (203 aa).

The next 5 helical transmembrane spans lie at 5-25 (IYIA…GLIL), 55-75 (LAAA…IVAA), 84-104 (IAAN…LFPV), 118-138 (IGVL…MWLA), and 159-179 (IFLW…LTLL).

The protein belongs to the PlsY family. In terms of assembly, probably interacts with PlsX.

The protein resides in the cell inner membrane. The enzyme catalyses an acyl phosphate + sn-glycerol 3-phosphate = a 1-acyl-sn-glycero-3-phosphate + phosphate. Its pathway is lipid metabolism; phospholipid metabolism. Catalyzes the transfer of an acyl group from acyl-phosphate (acyl-PO(4)) to glycerol-3-phosphate (G3P) to form lysophosphatidic acid (LPA). This enzyme utilizes acyl-phosphate as fatty acyl donor, but not acyl-CoA or acyl-ACP. In Rhodopseudomonas palustris (strain ATCC BAA-98 / CGA009), this protein is Glycerol-3-phosphate acyltransferase.